The sequence spans 205 residues: Guanylate kinase (205 aa).

The Guanylate kinase-like domain maps to 6–185 (GLLIVLSRPS…ACDRIKAIVV (180 aa)). 13 to 20 (RPSGVGKG) is a binding site for ATP.

The protein belongs to the guanylate kinase family.

The protein resides in the cytoplasm. It carries out the reaction GMP + ATP = GDP + ADP. Its function is as follows. Essential for recycling GMP and indirectly, cGMP. In Bacillus cereus (strain ATCC 14579 / DSM 31 / CCUG 7414 / JCM 2152 / NBRC 15305 / NCIMB 9373 / NCTC 2599 / NRRL B-3711), this protein is Guanylate kinase.